A 612-amino-acid polypeptide reads, in one-letter code: Zinc metalloproteinase-disintegrin-like 2d (612 aa).

An N-terminal signal peptide occupies residues 1 to 20; that stretch reads MIQVLLVTICLAVFPYQGSS. A propeptide spanning residues 21–189 is cleaved from the precursor; the sequence is IILGSGNVND…KKASQLNLTP (169 aa). Residues 199-395 form the Peptidase M12B domain; it reads KYIELVIVAD…NRPPCILNKP (197 aa). Residue E202 participates in Ca(2+) binding. Residue N218 is glycosylated (N-linked (GlcNAc...) asparagine). Ca(2+) is bound at residue D286. 3 cysteine pairs are disulfide-bonded: C310-C390, C350-C374, and C352-C357. Residue H335 participates in Zn(2+) binding. Residue E336 is part of the active site. Positions 339 and 345 each coordinate Zn(2+). Residues C390, N393, V405, N408, F410, E412, E415, and D418 each contribute to the Ca(2+) site. In terms of domain architecture, Disintegrin spans 403 to 489; that stretch reads PPVCGNYFVE…DCPTDNFQRN (87 aa). Cystine bridges form between C406-C435, C417-C430, C419-C425, C429-C452, C443-C449, C448-C474, C461-C481, C468-C500, C493-C505, C512-C562, C527-C573, C540-C550, C557-C599, and C593-C605. Positions 467-469 match the D/ECD-tripeptide motif; that stretch reads ECD.

This sequence belongs to the venom metalloproteinase (M12B) family. P-III subfamily. The cofactor is Zn(2+). As to expression, expressed by the venom gland.

It is found in the secreted. Snake venom metalloproteinase that impairs hemostasis in the envenomed animal. This chain is Zinc metalloproteinase-disintegrin-like 2d, found in Crotalus adamanteus (Eastern diamondback rattlesnake).